Reading from the N-terminus, the 812-residue chain is Ribonucleoside-diphosphate reductase large subunit (812 aa).

The ATP-cone domain occupies 12-103 (LYVIKRDGRQ…VSNLHKETKK (92 aa)). ATP contacts are provided by residues 16-17 (KR), 22-28 (EEVHFDK), Thr-64, and Asp-68. GDP is bound by residues Ser-213 and Ser-228. The cysteines at positions 229 and 455 are disulfide-linked. DTTP-binding positions include 237-239 (DSI), Lys-254, Arg-267, and 274-275 (CG). Asn-438 contributes to the GDP binding site. The Proton acceptor role is filled by Asn-438. Cys-440 serves as the catalytic Cysteine radical intermediate. Residues Glu-442 and 615–618 (TAST) each bind GDP. The active-site Proton acceptor is Glu-442. Thr-778 bears the Phosphothreonine mark. Ser-782 carries the phosphoserine modification. A Phosphotyrosine modification is found at Tyr-786.

Belongs to the ribonucleoside diphosphate reductase large chain family. As to quaternary structure, heterodimer of a large and a small subunit.

It carries out the reaction a 2'-deoxyribonucleoside 5'-diphosphate + [thioredoxin]-disulfide + H2O = a ribonucleoside 5'-diphosphate + [thioredoxin]-dithiol. Under complex allosteric control mediated by deoxynucleoside triphosphates and ATP binding to separate specificity and activation sites on the M1 subunit. The type of nucleotide bound at the specificity site determines substrate preference. It seems probable that ATP makes the enzyme reduce CDP and UDP, dGTP favors ADP reduction and dTTP favors GDP reduction. Stimulated by ATP and inhibited by dATP binding to the activity site. Provides the precursors necessary for DNA synthesis. Catalyzes the biosynthesis of deoxyribonucleotides from the corresponding ribonucleotides. The protein is Ribonucleoside-diphosphate reductase large subunit (RnrL) of Drosophila melanogaster (Fruit fly).